The primary structure comprises 476 residues: Glycogen synthase (476 aa).

An ADP-alpha-D-glucose-binding site is contributed by K15.

It belongs to the glycosyltransferase 1 family. Bacterial/plant glycogen synthase subfamily.

It carries out the reaction [(1-&gt;4)-alpha-D-glucosyl](n) + ADP-alpha-D-glucose = [(1-&gt;4)-alpha-D-glucosyl](n+1) + ADP + H(+). It participates in glycan biosynthesis; glycogen biosynthesis. Its function is as follows. Synthesizes alpha-1,4-glucan chains using ADP-glucose. The polypeptide is Glycogen synthase (Yersinia enterocolitica serotype O:8 / biotype 1B (strain NCTC 13174 / 8081)).